A 248-amino-acid chain; its full sequence is Triosephosphate isomerase (248 aa).

Substrate is bound by residues asparagine 12 and lysine 14. Residue lysine 14 is modified to N6-acetyllysine. Residue tyrosine 68 is modified to 3'-nitrotyrosine. Residue histidine 96 is the Electrophile of the active site. At serine 106 the chain carries Phosphoserine. Lysine 142 is covalently cross-linked (Glycyl lysine isopeptide (Lys-Gly) (interchain with G-Cter in SUMO1)). An N6-succinyllysine modification is found at lysine 149. N6-acetyllysine; alternate is present on lysine 156. Lysine 156 is modified (N6-succinyllysine; alternate). Glutamate 166 functions as the Proton acceptor in the catalytic mechanism. A Phosphothreonine modification is found at threonine 173. Residue lysine 194 is modified to N6-acetyllysine; alternate. Lysine 194 carries the post-translational modification N6-succinyllysine; alternate. Residue lysine 194 is modified to N6-methyllysine; alternate. Residue tyrosine 209 is modified to 3'-nitrotyrosine. The residue at position 212 (serine 212) is a Phosphoserine. Residue threonine 214 is modified to Phosphothreonine. Phosphoserine is present on serine 223. Lysine 238 bears the N6-acetyllysine mark.

This sequence belongs to the triosephosphate isomerase family. Homodimer.

The protein resides in the cytoplasm. The catalysed reaction is dihydroxyacetone phosphate = methylglyoxal + phosphate. The enzyme catalyses D-glyceraldehyde 3-phosphate = dihydroxyacetone phosphate. The protein operates within carbohydrate degradation; glycolysis; D-glyceraldehyde 3-phosphate from glycerone phosphate: step 1/1. Its pathway is carbohydrate biosynthesis; gluconeogenesis. Its function is as follows. Triosephosphate isomerase is an extremely efficient metabolic enzyme that catalyzes the interconversion between dihydroxyacetone phosphate (DHAP) and D-glyceraldehyde-3-phosphate (G3P) in glycolysis and gluconeogenesis. In terms of biological role, it is also responsible for the non-negligible production of methylglyoxal a reactive cytotoxic side-product that modifies and can alter proteins, DNA and lipids. The polypeptide is Triosephosphate isomerase (TPI1) (Sus scrofa (Pig)).